The following is a 106-amino-acid chain: Small ribosomal subunit protein mS33 (106 aa).

An N-acetylserine modification is found at serine 2. Positions 85 to 94 (LKKLRGKVKP) are enriched in basic residues. The segment at 85–106 (LKKLRGKVKPRKGEGKRAAKKK) is disordered. A compositionally biased stretch (basic and acidic residues) spans 95–106 (RKGEGKRAAKKK).

This sequence belongs to the mitochondrion-specific ribosomal protein mS33 family. Component of the mitochondrial ribosome small subunit (28S) which comprises a 12S rRNA and about 30 distinct proteins.

It is found in the mitochondrion. The sequence is that of Small ribosomal subunit protein mS33 from Bos taurus (Bovine).